Consider the following 275-residue polypeptide: Small ribosomal subunit protein uS2 (275 aa).

The interval 232–256 is disordered; it reads ARATDGKPEPEPVPGQELGADEPLA.

Belongs to the universal ribosomal protein uS2 family.

The sequence is that of Small ribosomal subunit protein uS2 from Acidothermus cellulolyticus (strain ATCC 43068 / DSM 8971 / 11B).